A 263-amino-acid chain; its full sequence is Phosphoinositide-3-kinase-interacting protein 1 (263 aa).

A signal peptide spans 1–21 (MLLAWVQAFLVSNMLLAEAYG). Residues 22-168 (SGGCFWDNGH…NSKEKKDLGT (147 aa)) are Extracellular-facing. One can recognise a Kringle domain in the interval 24–101 (GCFWDNGHLY…EKRPCENLSC (78 aa)). Disulfide bonds link C25/C101, C46/C82, and C70/C96. N98 carries an N-linked (GlcNAc...) asparagine glycan. The chain crosses the membrane as a helical span at residues 169–189 (LGYVLGITMMVIIVAIGAGII). Residues 190-263 (LGYSYKRGKD…LMGQAGTPGA (74 aa)) are Cytoplasmic-facing. Positions 242–251 (QTPVDPQEGS) are enriched in polar residues. Residues 242 to 263 (QTPVDPQEGSTPLMGQAGTPGA) form a disordered region.

The protein localises to the cell membrane. Functionally, negative regulator of hepatic phosphatidylinositol 3-kinase (PI3K) activity. The protein is Phosphoinositide-3-kinase-interacting protein 1 (PIK3IP1) of Pongo abelii (Sumatran orangutan).